The chain runs to 72 residues: UPF0729 protein C18orf32 homolog (72 aa).

The interval 1–33 (MVCIPCIVIPVLLWIFKKFLEPYIYPVVSRIWP) is necessary for its localzation to the endoplasmic reticulum and lipid droplets. Positions 36–72 (AVQQSGDKNMSKVDCKGAGTNGLPTKGPTEVSDKKKD) are disordered.

This sequence belongs to the UPF0729 family. In terms of assembly, interacts with DERL1 and AMFR. Post-translationally, undergoes ER-associated degradation (ERAD).

It is found in the endoplasmic reticulum. The protein resides in the lipid droplet. Functionally, may activate the NF-kappa-B signaling pathway. The sequence is that of UPF0729 protein C18orf32 homolog from Mus musculus (Mouse).